The chain runs to 455 residues: Gamma-glutamyl phosphate reductase (455 aa).

The protein belongs to the gamma-glutamyl phosphate reductase family.

It is found in the cytoplasm. The catalysed reaction is L-glutamate 5-semialdehyde + phosphate + NADP(+) = L-glutamyl 5-phosphate + NADPH + H(+). It participates in amino-acid biosynthesis; L-proline biosynthesis; L-glutamate 5-semialdehyde from L-glutamate: step 2/2. Functionally, catalyzes the NADPH-dependent reduction of L-glutamate 5-phosphate into L-glutamate 5-semialdehyde and phosphate. The product spontaneously undergoes cyclization to form 1-pyrroline-5-carboxylate. This is Gamma-glutamyl phosphate reductase from Synechococcus sp. (strain JA-3-3Ab) (Cyanobacteria bacterium Yellowstone A-Prime).